Reading from the N-terminus, the 285-residue chain is tRNA uridine(34) hydroxylase (285 aa).

The 96-residue stretch at 130-225 (RGDDVVFFDG…YGEAFGDTGL (96 aa)) folds into the Rhodanese domain. The active-site Cysteine persulfide intermediate is the Cys-185.

Belongs to the TrhO family.

It catalyses the reaction uridine(34) in tRNA + AH2 + O2 = 5-hydroxyuridine(34) in tRNA + A + H2O. Catalyzes oxygen-dependent 5-hydroxyuridine (ho5U) modification at position 34 in tRNAs. The chain is tRNA uridine(34) hydroxylase from Rhodococcus jostii (strain RHA1).